Here is a 65-residue protein sequence, read N- to C-terminus: Hirudin-3 (65 aa).

The segment at 1–3 (VVY) is interaction with thrombin active site. 3 cysteine pairs are disulfide-bonded: cysteine 6-cysteine 14, cysteine 16-cysteine 28, and cysteine 22-cysteine 39. The interval 39–65 (CVTGEGTPKPQSHNDGDFEEIPEEYLQ) is disordered. Threonine 45 carries an O-linked (GalNAc...) threonine glycan. Residues 55–65 (DFEEIPEEYLQ) are interaction with fibrinogen-binding exosite of thrombin. Residues 55 to 65 (DFEEIPEEYLQ) are compositionally biased toward acidic residues. Tyrosine 63 is modified (sulfotyrosine).

Belongs to the protease inhibitor I14 (hirudin) family.

The protein resides in the secreted. Its function is as follows. Hirudin is a potent thrombin-specific protease inhibitor. It forms a stable non-covalent complex with alpha-thrombin, thereby abolishing its ability to cleave fibrinogen. The chain is Hirudin-3 from Hirudo medicinalis (Medicinal leech).